Consider the following 530-residue polypeptide: Hyalin (530 aa).

HYR domains lie at Asn1–Ala66, Thr67–Glu150, Val151–Glu234, Val235–Glu319, Val320–Glu403, Glu404–Thr486, and Val487–Val530.

Homooligomer in presence of calcium. In terms of processing, glycosylated.

The protein resides in the secreted. It localises to the extracellular space. It is found in the extracellular matrix. Its function is as follows. Major constituent of the hyaline layer. The hyaline layer of echinoderm embryos is an extraembryonic matrix that functions as a substrate for cell adhesion through early development. This chain is Hyalin, found in Lytechinus variegatus (Green sea urchin).